The sequence spans 444 residues: Tryptophan 5-hydroxylase 1 (444 aa).

Residues S19–N94 form the ACT domain. Position 58 is a phosphoserine; by PKA (S58). 3 residues coordinate L-tryptophan: Y235, R257, and T265. Fe cation contacts are provided by H272, H277, and E317. Residues S336 and I366 each coordinate L-tryptophan.

The protein belongs to the biopterin-dependent aromatic amino acid hydroxylase family. Homotetramer. Interacts with DNAJC12. Fe(2+) serves as cofactor. Ubiquitinated, leading to its degradation by the proteasome. Ubiquitinated is triggered by phosphorylation. In terms of processing, phosphorylated; triggering degradation by the proteasome. As to expression, seems to be less widely expressed than isoform 1.

It catalyses the reaction (6R)-L-erythro-5,6,7,8-tetrahydrobiopterin + L-tryptophan + O2 = 5-hydroxy-L-tryptophan + (4aS,6R)-4a-hydroxy-L-erythro-5,6,7,8-tetrahydrobiopterin. It participates in aromatic compound metabolism; serotonin biosynthesis; serotonin from L-tryptophan: step 1/2. Oxidizes L-tryptophan to 5-hydroxy-l-tryptophan in the rate-determining step of serotonin biosynthesis. In Homo sapiens (Human), this protein is Tryptophan 5-hydroxylase 1 (TPH1).